Consider the following 318-residue polypeptide: Carbamate kinase (318 aa).

It belongs to the carbamate kinase family.

Its subcellular location is the cytoplasm. The catalysed reaction is hydrogencarbonate + NH4(+) + ATP = carbamoyl phosphate + ADP + H2O + H(+). Its pathway is metabolic intermediate metabolism; carbamoyl phosphate degradation; CO(2) and NH(3) from carbamoyl phosphate: step 1/1. The polypeptide is Carbamate kinase (arcC) (Lentilactobacillus hilgardii (Lactobacillus hilgardii)).